Reading from the N-terminus, the 304-residue chain is Prephenate dehydratase (304 aa).

The 176-residue stretch at 3 to 178 folds into the Prephenate dehydratase domain; sequence RIAYFGPVGT…ARTRFLLMRR (176 aa). One can recognise an ACT domain in the interval 193–271; it reads SIVAAAANRT…DVRFLGSFAR (79 aa).

The catalysed reaction is prephenate + H(+) = 3-phenylpyruvate + CO2 + H2O. It participates in amino-acid biosynthesis; L-phenylalanine biosynthesis; phenylpyruvate from prephenate: step 1/1. In Amycolatopsis methanolica, this protein is Prephenate dehydratase (pheA).